A 246-amino-acid chain; its full sequence is Granzyme H (246 aa).

The N-terminal stretch at 1 to 18 is a signal peptide; that stretch reads MQPFLLLLAFLLTPGAGT. Residues 19 to 20 constitute a propeptide, activation peptide; that stretch reads EE. Residues 21-244 enclose the Peptidase S1 domain; sequence IIGGHEAKPH…FLPWIKRTMK (224 aa). Positions 46 to 48 are mediates the preference for acidic residues at the P3' and P4' sites; it reads RKR. The cysteines at positions 49 and 65 are disulfide-linked. The active-site Charge relay system is the His-64. Residues Asn-71 and Asn-104 are each glycosylated (N-linked (GlcNAc...) asparagine). Catalysis depends on Asp-108, which acts as the Charge relay system. 2 cysteine pairs are disulfide-bonded: Cys-142-Cys-208 and Cys-172-Cys-187. Asn-179 carries an N-linked (GlcNAc...) asparagine glycan. The active-site Charge relay system is the Ser-202.

The protein belongs to the peptidase S1 family. Granzyme subfamily. As to expression, constitutively expressed in NK cells.

It localises to the cytolytic granule. Its activity is regulated as follows. Inhibited by SERPINB1. Its function is as follows. Cytotoxic chymotrypsin-like serine protease with preference for bulky and aromatic residues at the P1 position and acidic residues at the P3' and P4' sites. Probably necessary for target cell lysis in cell-mediated immune responses. Participates in the antiviral response via direct cleavage of several proteins essential for viral replication. In Homo sapiens (Human), this protein is Granzyme H (GZMH).